The primary structure comprises 588 residues: Phomenoic acid biosynthesis cluster cytochrome P450 monooxygenase (588 aa).

A signal peptide spans 1–21 (MSFARIFITILLLFILRRAFK). N-linked (GlcNAc...) asparagine glycosylation is present at Asn293. Residues 467 to 486 (HQSDPDRFKPSPDAPDEKLF) show a composition bias toward basic and acidic residues. The disordered stretch occupies residues 467–490 (HQSDPDRFKPSPDAPDEKLFRPSR). Residue Cys519 coordinates heme.

Belongs to the cytochrome P450 family. It depends on heme as a cofactor.

Its pathway is secondary metabolite biosynthesis. Functionally, cytochrome P450 monooxygenase; part of the gene cluster that mediates the biosynthesis of phomenoic acid, a long chain aliphatic carboxylic acid that does not appear to be essential for pathogenicity but may play a role in allowing to outcompete other fungi in the environmental niche via its antifungal properties. The polyketide synthase produces the long methylated aliphatic carboxylic acid chain of phomenoic acid. The cluster-specific cytochrome P450 monooxygenase may then hydroxylate the methyl group of carbon 31. The putative dehydrogenase YogA, which has no obvious role in phomenoic acid biosynthesis, may further modify phomenoic acid to produce a compound not identified yet. This chain is Phomenoic acid biosynthesis cluster cytochrome P450 monooxygenase, found in Leptosphaeria maculans (strain JN3 / isolate v23.1.3 / race Av1-4-5-6-7-8) (Blackleg fungus).